A 389-amino-acid polypeptide reads, in one-letter code: Na(+)/H(+) antiporter NhaA 1 (389 aa).

11 helical membrane passes run 12 to 32 (VLNE…ALLV), 62 to 82 (FLLW…GLEL), 97 to 117 (IVLP…LFAL), 128 to 148 (GWAI…MMCG), 157 to 177 (IFLL…IAIF), 184 to 204 (IVAF…NLLG), 220 to 240 (ISVL…AFFI), 260 to 280 (FWIA…VNLS), 282 to 302 (IDIG…LFVG), 331 to 351 (LYGV…IDGL), and 365 to 385 (LAIL…LKFF).

Belongs to the NhaA Na(+)/H(+) (TC 2.A.33) antiporter family.

Its subcellular location is the cell inner membrane. It catalyses the reaction Na(+)(in) + 2 H(+)(out) = Na(+)(out) + 2 H(+)(in). In terms of biological role, na(+)/H(+) antiporter that extrudes sodium in exchange for external protons. The sequence is that of Na(+)/H(+) antiporter NhaA 1 from Campylobacter jejuni (strain RM1221).